A 476-amino-acid chain; its full sequence is MAARIGPMAGLLCVRWWSTAQLAARGGPLVACRRWTSSSTDSVYDVVVSGGGMVGSAMACALGHDIHFHDKKILLLEAGPKKTLEKLSETYSNRVSSISLGSTTLLSSFGAWDHICNMRCKAFRRMQVWDSCSEALIMFDKDNLDDMGYIVENDVIMHAITKQLEAVADRVKVLYESKAVGYAWPGPFSLADSSPWVHITLGDGSTLQTKLLIGADGHNSGVRQAAGIQNVGWNYDQSAVVATLHLSEATENNVAWQRFLPSGPIALLPLSDTLSSLVWSTSHAHAAELVSMHEEEFVDAINSAFWSDVHHTDFVDSASAMVHHAVALLKPTKVSARQLPPSVAKVDAKSRALFPLGLGHAAEYVRPRVALIGDAAHRVHPLAGQGVNMGFGDISSLIHYLSTAAFNGKDLGSMSHLTGYETDRQRHNTALLAATDLLKRLYSTSTTPLVLLRTWGLQATNAVSPLKEQIMAFASR.

The N-terminal 42 residues, 1–42, are a transit peptide targeting the mitochondrion; the sequence is MAARIGPMAGLLCVRWWSTAQLAARGGPLVACRRWTSSSTDS.

The protein belongs to the UbiH/COQ6 family. As to quaternary structure, component of a multi-subunit COQ enzyme complex, composed of at least COQ3, COQ4, COQ5, COQ6, COQ7 and COQ9. Interacts with COQ8B and COQ7. FAD serves as cofactor. As to expression, in the kidney, expressed almost exclusively in glomerular podocytes. In the inner ear, expressed in the spiral ganglion, as well as in stria vascularis and spiral ligament cells.

The protein resides in the mitochondrion inner membrane. It is found in the golgi apparatus. Its subcellular location is the cell projection. It carries out the reaction 4-hydroxy-3-(all-trans-decaprenyl)benzoate + 2 reduced [2Fe-2S]-[ferredoxin] + O2 + 2 H(+) = 3,4-dihydroxy-5-(all-trans-decaprenyl)benzoate + 2 oxidized [2Fe-2S]-[ferredoxin] + H2O. It catalyses the reaction 2-methoxy-6-(all-trans-decaprenyl)phenol + 2 reduced [2Fe-2S]-[ferredoxin] + O2 + 2 H(+) = 2-methoxy-6-(all-trans-decaprenyl)benzene-1,4-diol + 2 oxidized [2Fe-2S]-[ferredoxin] + H2O. Its pathway is cofactor biosynthesis; ubiquinone biosynthesis. In terms of biological role, FAD-dependent monooxygenase required for two non-consecutive steps during ubiquinone biosynthesis. Required for the C5-ring hydroxylation during ubiquinone biosynthesis by catalyzing the hydroxylation of 4-hydroxy-3-(all-trans-decaprenyl)benzoic acid to 3,4-dihydroxy-5-(all-trans-decaprenyl)benzoic acid. Also acts downstream of COQ4, for the C1-hydroxylation during ubiquinone biosynthesis by catalyzing the hydroxylation of 2-methoxy-6-(all-trans-decaprenyl)phenol to 2-methoxy-6-(all-trans-decaprenyl)benzene-1,4-diol. The electrons required for the hydroxylation reaction are funneled indirectly to COQ6 from NADPH via a ferredoxin/ferredoxin reductase system composed of FDX2 and FDXR. In Rattus norvegicus (Rat), this protein is Ubiquinone biosynthesis monooxygenase COQ6, mitochondrial.